The following is a 183-amino-acid chain: Capsid protein (183 aa).

A disordered region spans residues 136–183; it reads NAPILSTLPETTVVRRRGRSPRRRTPSPRRRRSQSPRRRRSQSRESQC. The span at 149–176 shows a compositional bias: basic residues; that stretch reads VRRRGRSPRRRTPSPRRRRSQSPRRRRS. Phosphoserine; by host is present on residues Ser-155, Ser-162, and Ser-170. The 1; half-length repeat unit spans residues 155-161; the sequence is SPRRRTP. Residues 155–177 are 3 X 8 AA repeats of S-P-R-R-R-[PR]-S-Q; the sequence is SPRRRTPSPRRRRSQSPRRRRSQ. The Bipartite nuclear localization signal motif lies at 158 to 175; sequence RRTPSPRRRRSQSPRRRR. A run of 2 repeats spans residues 162–169 and 170–177. The RNA binding stretch occupies residues 177–183; the sequence is QSRESQC.

The protein belongs to the orthohepadnavirus core antigen family. As to quaternary structure, homodimerizes, then multimerizes. Interacts with cytosol exposed regions of viral L glycoprotein present in the reticulum-to-Golgi compartment. Interacts with human FLNB. Phosphorylated form interacts with host importin alpha; this interaction depends on the exposure of the NLS, which itself depends upon genome maturation and/or phosphorylation of the capsid protein. Interacts with host NUP153. Phosphorylated by host SRPK1, SRPK2, and maybe protein kinase C or GAPDH. Phosphorylation is critical for pregenomic RNA packaging. Protein kinase C phosphorylation is stimulated by HBx protein and may play a role in transport of the viral genome to the nucleus at the late step during the viral replication cycle.

Its subcellular location is the virion. It is found in the host cytoplasm. Functionally, self assembles to form an icosahedral capsid. Most capsids appear to be large particles with an icosahedral symmetry of T=4 and consist of 240 copies of capsid protein, though a fraction forms smaller T=3 particles consisting of 180 capsid proteins. Entering capsids are transported along microtubules to the nucleus. Phosphorylation of the capsid is thought to induce exposure of nuclear localization signal in the C-terminal portion of the capsid protein that allows binding to the nuclear pore complex via the importin (karyopherin-) alpha and beta. Capsids are imported in intact form through the nuclear pore into the nuclear basket, where it probably binds NUP153. Only capsids that contain the mature viral genome can release the viral DNA and capsid protein into the nucleoplasm. Immature capsids get stuck in the basket. Capsids encapsulate the pre-genomic RNA and the P protein. Pre-genomic RNA is reverse-transcribed into DNA while the capsid is still in the cytoplasm. The capsid can then either be directed to the nucleus, providing more genomes for transcription, or bud through the endoplasmic reticulum to provide new virions. The polypeptide is Capsid protein (Homo sapiens (Human)).